The following is a 107-amino-acid chain: Heme-degrading monooxygenase (107 aa).

An ABM domain is found at 2-94; the sequence is IIVTNTAKIT…YILDNKISYY (93 aa). Asn-6 contributes to the Fe cation binding site. His-76 contacts heme.

The protein belongs to the antibiotic biosynthesis monooxygenase family. Heme-degrading monooxygenase IsdG subfamily. Homodimer.

The protein resides in the cytoplasm. The enzyme catalyses heme b + 3 reduced [NADPH--hemoprotein reductase] + 3 O2 = biliverdin IXalpha + CO + Fe(2+) + 3 oxidized [NADPH--hemoprotein reductase] + 3 H2O + H(+). Functionally, allows bacterial pathogens to use the host heme as an iron source. Catalyzes the oxidative degradation of the heme macrocyclic porphyrin ring to the biliverdin in the presence of a suitable electron donor such as ascorbate or NADPH--cytochrome P450 reductase, with subsequent release of free iron. This Bacillus cereus (strain AH187) protein is Heme-degrading monooxygenase.